The following is a 217-amino-acid chain: Translation initiation factor 6 (217 aa).

Belongs to the eIF-6 family.

Binds to the 50S ribosomal subunit and prevents its association with the 30S ribosomal subunit to form the 70S initiation complex. The protein is Translation initiation factor 6 of Methanococcoides burtonii (strain DSM 6242 / NBRC 107633 / OCM 468 / ACE-M).